Here is a 560-residue protein sequence, read N- to C-terminus: DNA ligase B (560 aa).

Lys124 acts as the N6-AMP-lysine intermediate in catalysis.

This sequence belongs to the NAD-dependent DNA ligase family. LigB subfamily.

It catalyses the reaction NAD(+) + (deoxyribonucleotide)n-3'-hydroxyl + 5'-phospho-(deoxyribonucleotide)m = (deoxyribonucleotide)n+m + AMP + beta-nicotinamide D-nucleotide.. Catalyzes the formation of phosphodiester linkages between 5'-phosphoryl and 3'-hydroxyl groups in double-stranded DNA using NAD as a coenzyme and as the energy source for the reaction. The chain is DNA ligase B from Escherichia coli O157:H7.